Consider the following 183-residue polypeptide: NAD(P)H-quinone oxidoreductase subunit J (183 aa).

The interval 1–21 is disordered; the sequence is MAEENAQEKQAPPSAGEQSEP.

This sequence belongs to the complex I 30 kDa subunit family. NDH-1 can be composed of about 15 different subunits; different subcomplexes with different compositions have been identified which probably have different functions.

Its subcellular location is the cellular thylakoid membrane. It catalyses the reaction a plastoquinone + NADH + (n+1) H(+)(in) = a plastoquinol + NAD(+) + n H(+)(out). The catalysed reaction is a plastoquinone + NADPH + (n+1) H(+)(in) = a plastoquinol + NADP(+) + n H(+)(out). In terms of biological role, NDH-1 shuttles electrons from an unknown electron donor, via FMN and iron-sulfur (Fe-S) centers, to quinones in the respiratory and/or the photosynthetic chain. The immediate electron acceptor for the enzyme in this species is believed to be plastoquinone. Couples the redox reaction to proton translocation, and thus conserves the redox energy in a proton gradient. Cyanobacterial NDH-1 also plays a role in inorganic carbon-concentration. This Synechococcus sp. (strain JA-2-3B'a(2-13)) (Cyanobacteria bacterium Yellowstone B-Prime) protein is NAD(P)H-quinone oxidoreductase subunit J.